We begin with the raw amino-acid sequence, 234 residues long: uncharacterized protein (234 aa).

3 helical membrane-spanning segments follow: residues 32-52 (GLRTNTLVAIGAALFVIVSVL), 62-82 (IPAQIVSGIGFLAGGVILKEG), and 106-126 (QGLFSEAVLGSMMVLVANIAL).

This sequence belongs to the MgtC/SapB family.

It localises to the cell membrane. This is an uncharacterized protein from Synechocystis sp. (strain ATCC 27184 / PCC 6803 / Kazusa).